The following is a 212-amino-acid chain: Orotate phosphoribosyltransferase (212 aa).

5-phospho-alpha-D-ribose 1-diphosphate is bound by residues Arg-97, Lys-101, His-103, and 123–131 (DDLISTGGS). Residue Ser-127 participates in orotate binding.

Belongs to the purine/pyrimidine phosphoribosyltransferase family. PyrE subfamily. As to quaternary structure, homodimer. The cofactor is Mg(2+).

The enzyme catalyses orotidine 5'-phosphate + diphosphate = orotate + 5-phospho-alpha-D-ribose 1-diphosphate. Its pathway is pyrimidine metabolism; UMP biosynthesis via de novo pathway; UMP from orotate: step 1/2. Catalyzes the transfer of a ribosyl phosphate group from 5-phosphoribose 1-diphosphate to orotate, leading to the formation of orotidine monophosphate (OMP). This chain is Orotate phosphoribosyltransferase, found in Lactiplantibacillus plantarum (strain ATCC BAA-793 / NCIMB 8826 / WCFS1) (Lactobacillus plantarum).